We begin with the raw amino-acid sequence, 514 residues long: 2,3-bisphosphoglycerate-independent phosphoglycerate mutase (514 aa).

Positions 14 and 64 each coordinate Mn(2+). Catalysis depends on serine 64, which acts as the Phosphoserine intermediate. Residues histidine 125, 155 to 156 (RD), arginine 187, arginine 193, 263 to 266 (RADR), and lysine 336 each bind substrate. Positions 403, 407, 444, 445, and 463 each coordinate Mn(2+).

This sequence belongs to the BPG-independent phosphoglycerate mutase family. In terms of assembly, monomer. Mn(2+) serves as cofactor.

The catalysed reaction is (2R)-2-phosphoglycerate = (2R)-3-phosphoglycerate. It participates in carbohydrate degradation; glycolysis; pyruvate from D-glyceraldehyde 3-phosphate: step 3/5. In terms of biological role, catalyzes the interconversion of 2-phosphoglycerate and 3-phosphoglycerate. This chain is 2,3-bisphosphoglycerate-independent phosphoglycerate mutase, found in Shewanella sediminis (strain HAW-EB3).